The following is a 420-amino-acid chain: Fasciclin-like arabinogalactan protein 4 (420 aa).

An N-terminal signal peptide occupies residues 1–28 (MANVISISHFTLLALPYLLLLLSSTAAA). FAS1 domains follow at residues 29 to 177 (INVT…DSLI) and 205 to 351 (GINL…SKVL). Residues N30, N40, N135, N154, N167, N207, N312, and N317 are each glycosylated (N-linked (GlcNAc...) asparagine). The disordered stretch occupies residues 360-388 (SGQPVATAPPQEISLSPESSSEQPSRLVS). The span at 368 to 384 (PPQEISLSPESSSEQPS) shows a compositional bias: low complexity. S396 carries GPI-anchor amidated serine lipidation. Positions 397–420 (GAVKRPLGFLVLWCWCIAFCYVLV) are cleaved as a propeptide — removed in mature form.

It belongs to the fasciclin-like AGP family. Expressed in all plant organs and tissues, including guard cells in the leaf.

It is found in the cell membrane. Its function is as follows. May be a cell surface adhesion protein that is required for normal cell expansion. The sequence is that of Fasciclin-like arabinogalactan protein 4 (FLA4) from Arabidopsis thaliana (Mouse-ear cress).